Consider the following 356-residue polypeptide: MSDVSAVDKPRVRVLSLNGGGARGMFTISILAEIERILARKHPHQDIKIGDYFDLITGTSIGGILALGLATGKSARELESVFFDKAKDIFPTRWSLVNLCKALCAPIYNSSPLRETIEMMIGAETTFNDLTRRVMIPAVNLSTGKPLFFKTPHNPDFTRDGPLKLIDAALATSAAPTYFAPHYCKDLRSYFADGGLVANNPSYIGLLEVFRDMKSDFDVSHKDVYILNIGTVGEDYSLSPSLLSKKRWTGYCHLWGMGKRLVLTTMTANQHLHKNMLLRELALHDALDNYLYLDEVIPNEAASDITLDNASDSSLQNLSARGKQLANVQFAQNQKLKNFFISPAKPFKRTDVQEKL.

The PNPLA domain occupies 15 to 206 (LSLNGGGARG…VANNPSYIGL (192 aa)). Residues 19 to 24 (GGGARG) carry the GXGXXG motif. Positions 58-62 (GTSIG) match the GXSXG motif. The active-site Nucleophile is S60. Catalysis depends on D193, which acts as the Proton acceptor. The short motif at 193-195 (DGG) is the DGA/G element.

Belongs to the patatin family.

The catalysed reaction is a 1,2-diacyl-sn-glycero-3-phosphocholine + H2O = a 2-acyl-sn-glycero-3-phosphocholine + a fatty acid + H(+). The enzyme catalyses 1,2-di-(9Z-octadecenoyl)-sn-glycero-3-phosphoethanolamine + 2 H2O = sn-glycero-3-phosphoethanolamine + 2 (9Z)-octadecenoate + 2 H(+). Its activity is regulated as follows. Phospholipase activity is specifically activated upon 3',3'-cGAMP binding, which is produced by the cognate cyclic nucleotide synthase encoded in the same operon. In terms of biological role, effector phospholipase of a CBASS antiviral system. CBASS (cyclic oligonucleotide-based antiphage signaling system) provides immunity against bacteriophages. The CD-NTase protein (DncV) synthesizes cyclic nucleotides in response to infection; these serve as specific second messenger signals. The signals activate a diverse range of effectors, leading to bacterial cell death and thus abortive phage infection. A type II-A(GA) CBASS system. Phospholipase that is activated upon binding to the cyclic dinucleotide (CDN) second messenger 3',3'-cyclic GMP-AMP (cGAMP). Degrades phospholipids in the cell membrane. Functionally, protects E.coli against phage infection. When capV and dncV are introduced in E.coli MG1655 there is 1000-fold protection against phage P1; protection against other phage (T2, T4, T5, T6 and lambda-vir) requires the 2 subsequent genes (cap2 and cap3). Upon P1 phage infection the activating molecule is produced between 30 and 40 minutes. Activation leads to bacterial cell lysis and death, which occurs before the phage has finished its replication cycle, thus protecting non-infected bacteria by aborting the phage infection and preventing its propagation. In another paper the capV-dncV-cap2-cap3 operon gives 10(4)-10(5)-fold protection against phages lambda, T2, T4 and T6, about 1000-fold protection against P1 and 10-fold protection against T5. The protein is cGAMP-activated phospholipase of Escherichia coli (strain TW11681).